Consider the following 207-residue polypeptide: Probable GTP-binding protein EngB (207 aa).

The EngB-type G domain occupies G24–L199. GTP contacts are provided by residues G32–S39, G59–Q63, D77–G80, T144–D147, and Y178–G180. Positions 39 and 61 each coordinate Mg(2+).

Belongs to the TRAFAC class TrmE-Era-EngA-EngB-Septin-like GTPase superfamily. EngB GTPase family. The cofactor is Mg(2+).

Functionally, necessary for normal cell division and for the maintenance of normal septation. In Xanthomonas oryzae pv. oryzae (strain MAFF 311018), this protein is Probable GTP-binding protein EngB.